The primary structure comprises 353 residues: UPF0658 Golgi apparatus membrane protein C23H3.04 (353 aa).

Helical transmembrane passes span 39 to 59, 76 to 96, 103 to 123, 172 to 192, 226 to 246, 249 to 269, 281 to 301, and 318 to 338; these read IFFLTVIILECLLIICFEGYC, SLPISLTLFIFACFFILYLCV, NIIEIIGLLCIHVALFIYSIV, PFLIALPVILGVASVMLGFLA, LLKIDIYFFLGVTVQYVMVLP, AVVEFVLTILVLPLTVLILTL, LMMTVQFFYVCGIPYILFKII, and MITTFSVITLLLLLFTIAIGF.

Belongs to the UPF0658 family.

Its subcellular location is the golgi apparatus membrane. This is UPF0658 Golgi apparatus membrane protein C23H3.04 from Schizosaccharomyces pombe (strain 972 / ATCC 24843) (Fission yeast).